A 259-amino-acid polypeptide reads, in one-letter code: Global transcriptional regulator CodY (259 aa).

The interval 1 to 155 (MALLQKTRII…GATVVGMEIL (155 aa)) is GAF domain. Residues 203 to 222 (ASKIADRVGITRSVIVNALR) constitute a DNA-binding region (H-T-H motif). Serine 215 carries the phosphoserine modification.

The protein belongs to the CodY family.

Its subcellular location is the cytoplasm. In terms of biological role, DNA-binding global transcriptional regulator which is involved in the adaptive response to starvation and acts by directly or indirectly controlling the expression of numerous genes in response to nutrient availability. During rapid exponential growth, CodY is highly active and represses genes whose products allow adaptation to nutrient depletion. This Bacillus velezensis (strain DSM 23117 / BGSC 10A6 / LMG 26770 / FZB42) (Bacillus amyloliquefaciens subsp. plantarum) protein is Global transcriptional regulator CodY.